A 555-amino-acid chain; its full sequence is Cilia- and flagella-associated protein 184 (555 aa).

The span at 1-12 (MDVSSEHTKDPG) shows a compositional bias: basic and acidic residues. Residues 1–202 (MDVSSEHTKD…KSQEEGKRLY (202 aa)) form a disordered region. Acidic residues-rich tracts occupy residues 41-54 (GELESEPEEEEEEQ) and 95-105 (PEPEEPAEVGA). Residues 106–117 (EEPAQPEPGAGP) show a composition bias toward low complexity. A compositionally biased stretch (acidic residues) spans 118 to 131 (EELEAEAGAEELEQ). A compositionally biased stretch (basic and acidic residues) spans 174-202 (ETQRDGAESKERDGEGRPAKSQEEGKRLY). Coiled coils occupy residues 305-441 (YHQE…NSVQ) and 505-531 (DSLLRDLEEKVDKTELLHRRLESLKRH).

Belongs to the CFAP184 family. In terms of assembly, forms a complex with CFAP263; the interaction is required for functional activity in cilia.

The protein localises to the cell projection. It localises to the cilium. The protein resides in the cytoplasm. Its subcellular location is the cytoskeleton. It is found in the microtubule organizing center. The protein localises to the centrosome. In terms of biological role, in complex with CFAP263, acts as a regulator of ciliary beating that connects radial spoke 3 (RS3) to the inner dynein arm (IDA) and the nexin-dynein regulatory complex (N-DRC). The complex is positioned parallel to N-DRC and forms a connection between the arch at the base of RS3, the IDA tail and N-DRC. In Homo sapiens (Human), this protein is Cilia- and flagella-associated protein 184.